The sequence spans 307 residues: NmrA-like family domain-containing oxidoreductase flvB (307 aa).

Residues 4–9 (LITGAT), 32–36 (SSSSP), 53–54 (DY), 74–76 (STN), and 148–151 (YVEG) each bind NADP(+).

This sequence belongs to the NmrA-type oxidoreductase family.

The enzyme catalyses (2S)-5,5-dimethyl-2,3,4,5-tetrahydropyridine-2,6-dicarboxylate + NADPH + 2 H(+) = (6S)-3,3-dimethylpiperidine-2,6-dicarboxylate + NADP(+). It carries out the reaction (2S)-5,5-dimethyl-2,3,4,5-tetrahydropyridine-2,6-dicarboxylate + NADH + 2 H(+) = (6S)-3,3-dimethylpiperidine-2,6-dicarboxylate + NAD(+). The protein operates within secondary metabolite biosynthesis; terpenoid biosynthesis. Its function is as follows. NmrA-like family domain-containing oxidoreductase; part of the gene cluster that mediates the biosynthesis of flavunoidine, an alkaloidal terpenoid with a tetracyclic cage-like core connected to dimethylcadaverine via a C-N bond and acylated with 5,5-dimethyl-L-pipecolate. The tetracyclic core is synthesized by the terpene cyclase flvE and the cytochrome P450 monooxygenase flvD. The terpene cyclase flvE catalyzes the cyclization of farnesyl pyrophosphate (FPP) to form (1R,4R,5S)-(+)-acoradiene and the cytochrome P450 monooxygenase flvD is then responsible for oxidative conversion of (1R,4R,5S)-(+)-acoradiene into the tetracyclic cage present in the final product flavunoidine. In parallel, the N-methyltransferase flvH dimethylates L-lysine to give N,N-dimethyl-L-Lysin which is decarboxylated by flvG to afford dimethylcadaverine. The terpene cyclase-like protein flvF is the enzyme that attaches the dimethylcadaverine precusor at the C-7 of the tetracyclic cage to yield pre-flavunoidine. The cytochrome monooxygenase flvC hydroxylates the C-10 position of pre-flavunoidine whereas the NRPS flvI acylates the terpenoid core at the hydroxylated C-10 with dimethylpipecolate to yield final flavunoidine. The bifunctional enzyme flvA and the dehydrogenase flvB are responsible for the synthesis of the dimethylpipecolate precursor. The PLP-dependent lyase domain of flvA might use L-O-acetyl-homoserine and alpha-keto-isovalerate to form an intermediary ketone that can cyclize intramolecularly to yield an imine. The imine can be reduced by flvB to yield the 6-carboxylated pipecolate. The C-terminal alpha-KG-dependent oxygenase domain of flvA is then proposed to catalyze the decarboxylation to yield dimethylpipecolate. The polypeptide is NmrA-like family domain-containing oxidoreductase flvB (Aspergillus flavus (strain ATCC 200026 / FGSC A1120 / IAM 13836 / NRRL 3357 / JCM 12722 / SRRC 167)).